Consider the following 1826-residue polypeptide: Protein TIC 214 (1826 aa).

5 helical membrane-spanning segments follow: residues 18–38 (IINS…FSIG), 67–87 (FITG…HLAL), 127–147 (LSIQ…HFIL), 175–195 (VGWL…LVWI), and 221–241 (IFSI…PSPI). A disordered region spans residues 250 to 308 (TEEGWESEEETDVEIETASETKGTKQEQEGSTEEDPSPSLFSEEKEDPDKIDETEEIRV). Acidic residues-rich tracts occupy residues 252–266 (EGWE…EIET) and 293–304 (EKEDPDKIDETE). A helical transmembrane segment spans residues 774-794 (LILIIQSIFRKYILLPSLIIV). The disordered stretch occupies residues 1032–1057 (TKGLMKEKNSNAKKRGSPNKTSFNRK). Residues 1042 to 1057 (NAKKRGSPNKTSFNRK) show a composition bias toward basic residues. The helical transmembrane segment at 1081–1101 (FYLFITIFIKRIYIDIFVCII) threads the bilayer.

Belongs to the TIC214 family. Part of the Tic complex.

The protein localises to the plastid. The protein resides in the chloroplast inner membrane. Involved in protein precursor import into chloroplasts. May be part of an intermediate translocation complex acting as a protein-conducting channel at the inner envelope. The polypeptide is Protein TIC 214 (Daucus carota (Wild carrot)).